We begin with the raw amino-acid sequence, 907 residues long: Schlafen family member 13 (907 aa).

Positions 1–353 (MEIHPSLVVE…WVRMMVDIGP (353 aa)) are n'-domain region. Catalysis depends on residues E205 and E210. Zn(2+)-binding residues include H281, C283, and C318. 604–611 (GMPGSGKT) contacts ATP.

It belongs to the Schlafen family. Subgroup III subfamily. It depends on Mg(2+) as a cofactor.

Its subcellular location is the cytoplasm. Its function is as follows. Endoribonuclease that cleaves tRNAs and rRNAs. Cleaves tRNAs 11 nucleotides from the 3'-terminus at the acceptor stem. Does not act on tRNA(Sec). In Rattus norvegicus (Rat), this protein is Schlafen family member 13.